We begin with the raw amino-acid sequence, 295 residues long: 33 kDa chaperonin (295 aa).

2 disulfides stabilise this stretch: C236-C238 and C269-C272.

The protein belongs to the HSP33 family. In terms of processing, under oxidizing conditions two disulfide bonds are formed involving the reactive cysteines. Under reducing conditions zinc is bound to the reactive cysteines and the protein is inactive.

It is found in the cytoplasm. Redox regulated molecular chaperone. Protects both thermally unfolding and oxidatively damaged proteins from irreversible aggregation. Plays an important role in the bacterial defense system toward oxidative stress. This is 33 kDa chaperonin from Geobacter sp. (strain M21).